Consider the following 232-residue polypeptide: N-(5'-phosphoribosyl)anthranilate isomerase (232 aa).

The protein belongs to the TrpF family.

The enzyme catalyses N-(5-phospho-beta-D-ribosyl)anthranilate = 1-(2-carboxyphenylamino)-1-deoxy-D-ribulose 5-phosphate. It functions in the pathway amino-acid biosynthesis; L-tryptophan biosynthesis; L-tryptophan from chorismate: step 3/5. The chain is N-(5'-phosphoribosyl)anthranilate isomerase (TRP1) from Lipomyces starkeyi (Oleaginous yeast).